Consider the following 503-residue polypeptide: MSKVIGKVAQIIGPVVDVVFNGKDVELPKIYDSLEVTKKDGTLLVLEVQSHIGENTVRTISMDSTDGLSRGYEVVGTGNPIQMPIGPDVYGRLFNVVGDAIDGLGNLPKTGENGLPIHRQAPKFEDLSTSSEVLFTGIKVIDLIEPYAKGGKIGLFGGAGVGKTVLIQELINNIAKGHGGLSVFAGVGERTREGNDLLREMLESGIIKYGDDFMHSMENGGWDLSKVDMPGMRESKATFVFGQMNEPPGARARVALSGLSIAEYFRDGAGSDQGKDVLFFVDNIFRFTQAGSEVSALLGRMPSAVGYQPTLATEMGAMQERITSTNKGSITSVQAVYVPADDLTDPAPATTFAHLDATTVLSRKIAELGIYPAVDPLDSTSRILTPHILGDEHYNCAQRVKEILQKYKQLQDIIAILGMEELSEEDKLSVSRARRVQRFLSQPFHVAEQFTGIPGVLVDIKDTIKGFNMIIDGELDHLPEAAFNLKGSIQDAIEAGEKMLAEA.

Glycine 157 to threonine 164 serves as a coordination point for ATP.

It belongs to the ATPase alpha/beta chains family. As to quaternary structure, F-type ATPases have 2 components, CF(1) - the catalytic core - and CF(0) - the membrane proton channel. CF(1) has five subunits: alpha(3), beta(3), gamma(1), delta(1), epsilon(1). CF(0) has three main subunits: a(1), b(2) and c(9-12). The alpha and beta chains form an alternating ring which encloses part of the gamma chain. CF(1) is attached to CF(0) by a central stalk formed by the gamma and epsilon chains, while a peripheral stalk is formed by the delta and b chains.

Its subcellular location is the cell inner membrane. The enzyme catalyses ATP + H2O + 4 H(+)(in) = ADP + phosphate + 5 H(+)(out). Produces ATP from ADP in the presence of a proton gradient across the membrane. The catalytic sites are hosted primarily by the beta subunits. This is ATP synthase subunit beta from Flavobacterium johnsoniae (strain ATCC 17061 / DSM 2064 / JCM 8514 / BCRC 14874 / CCUG 350202 / NBRC 14942 / NCIMB 11054 / UW101) (Cytophaga johnsonae).